A 174-amino-acid chain; its full sequence is UPF0340 protein SAB1998c (174 aa).

This sequence belongs to the UPF0340 family.

In Staphylococcus aureus (strain bovine RF122 / ET3-1), this protein is UPF0340 protein SAB1998c.